We begin with the raw amino-acid sequence, 65 residues long: Double gene block protein 1 (65 aa).

Positions 1 to 41 are disordered; it reads MDSQRTVELTNPRGRSKERGDSGGKQKNSMGRKIANDAISE. Over residues 15 to 24 the composition is skewed to basic and acidic residues; that stretch reads RSKERGDSGG. Residues 17 to 43 are RNA-binding; the sequence is KERGDSGGKQKNSMGRKIANDAISESK.

Belongs to the carmovirus double gene block protein 1 family. As to quaternary structure, homodimer.

Functionally, cell-to-cell movement. Displays RNA-binding activity. The polypeptide is Double gene block protein 1 (Melon necrotic spot virus (MNSV)).